A 398-amino-acid chain; its full sequence is MTFVETVAVPDNEERPSAGHNRPVADSTKCPNAREMKVQNRVAQRTHHRRLKTKLEVLRERLKEPEKQVGEPARVQTSTSTLVSDAATSLADSMCLVPAVQNDQAMAFDFLMTPSPSVGNDCPSNDLETMRQAASVHSNTLGGAFPLNRSPCTENMTPESQVSLSTAPLCFTSVVPAELDMDAFCTLDSSDWSRPNEESLLRLANYSTSVSPTNVQWGVDENAPLQDRVRYMRDQAVAMGFGSLDDVVEAHYTQKLECTSPSFQEQRLSRNRRLSRLLSTLHNAAKDWSEWERRGLQEQVTQGAEDILVSELNSYITQRSMNSTDDKIITGGLLDEQSRLRQDVEERRRLQDSLPNLGALLTTLLSRSNAPNQDARRDTVLAMIKTMCFDQDENMSIS.

The segment at 1–28 (MTFVETVAVPDNEERPSAGHNRPVADST) is disordered. Residues 31-62 (PNAREMKVQNRVAQRTHHRRLKTKLEVLRERL) form the bZIP domain. The tract at residues 34-50 (REMKVQNRVAQRTHHRR) is basic motif. Positions 51-58 (LKTKLEVL) are leucine-zipper.

Belongs to the bZIP family.

The protein resides in the nucleus. It functions in the pathway secondary metabolite biosynthesis. Transcription factor; part of the gene cluster that mediates the biosynthesis of KK-1, a novel cyclic depsipeptide with 10 residues which is a promising active compound with high activity against many plant pathogens, especially Botrytis cinerea. Positively regulates the expression of all the genes from the KK-1 biosynthesis gene cluster. This chain is Transcription factor kk1f, found in Curvularia clavata.